The sequence spans 386 residues: Cytochrome b (386 aa).

4 consecutive transmembrane segments (helical) span residues Leu-32–Met-52, Trp-76–Gly-98, Val-113–Cys-133, and Phe-179–Met-199. Heme b is bound by residues His-82 and His-96. Residues His-183 and His-197 each contribute to the heme b site. Residue His-202 coordinates a ubiquinone. 4 helical membrane passes run Phe-225 to Phe-245, Leu-289 to Asp-309, Phe-321 to Glu-341, and Phe-348 to Pro-368.

This sequence belongs to the cytochrome b family. Fungal cytochrome b-c1 complex contains 10 subunits; 3 respiratory subunits, 2 core proteins and 5 low-molecular weight proteins. Cytochrome b-c1 complex is a homodimer. Requires heme b as cofactor.

It is found in the mitochondrion inner membrane. Component of the ubiquinol-cytochrome c reductase complex (complex III or cytochrome b-c1 complex) that is part of the mitochondrial respiratory chain. The b-c1 complex mediates electron transfer from ubiquinol to cytochrome c. Contributes to the generation of a proton gradient across the mitochondrial membrane that is then used for ATP synthesis. The polypeptide is Cytochrome b (COB) (Kluyveromyces lactis (strain ATCC 8585 / CBS 2359 / DSM 70799 / NBRC 1267 / NRRL Y-1140 / WM37) (Yeast)).